A 492-amino-acid chain; its full sequence is ATP synthase subunit beta, chloroplastic (492 aa).

ATP is bound at residue 170-177 (GGAGVGKT).

Belongs to the ATPase alpha/beta chains family. In terms of assembly, F-type ATPases have 2 components, CF(1) - the catalytic core - and CF(0) - the membrane proton channel. CF(1) has five subunits: alpha(3), beta(3), gamma(1), delta(1), epsilon(1). CF(0) has four main subunits: a(1), b(1), b'(1) and c(9-12).

It is found in the plastid. The protein localises to the chloroplast thylakoid membrane. The enzyme catalyses ATP + H2O + 4 H(+)(in) = ADP + phosphate + 5 H(+)(out). Its function is as follows. Produces ATP from ADP in the presence of a proton gradient across the membrane. The catalytic sites are hosted primarily by the beta subunits. The polypeptide is ATP synthase subunit beta, chloroplastic (Pinus thunbergii (Japanese black pine)).